A 163-amino-acid polypeptide reads, in one-letter code: Zinc finger A20 and AN1 domain-containing stress-associated protein 3 (163 aa).

An A20-type zinc finger spans residues 7–41 (LQEPRLCANNCGFFGSTATQNLCSKCFRDLQHQEQ). Zn(2+)-binding residues include cysteine 13, cysteine 17, cysteine 29, and cysteine 32. A disordered region spans residues 57-101 (VGAAASSSVSPPPPPPADSKEIVEAKSEKRAAAEPEEADGPPQDP). Positions 74–89 (DSKEIVEAKSEKRAAA) are enriched in basic and acidic residues. The AN1-type zinc finger occupies 98 to 144 (PQDPKRCLTCRRRVGITGFRCRCGFVFCGTHRYAEQHECSFDFKRMG). Residues cysteine 104, cysteine 107, cysteine 118, cysteine 120, cysteine 125, histidine 128, histidine 134, and cysteine 136 each contribute to the Zn(2+) site.

In terms of biological role, may be involved in environmental stress response. This is Zinc finger A20 and AN1 domain-containing stress-associated protein 3 (SAP3) from Arabidopsis thaliana (Mouse-ear cress).